The chain runs to 399 residues: Elongation factor Tu (399 aa).

The 200-residue stretch at 10-209 (KPHVNIGTIG…AVDDYIPTPA (200 aa)) folds into the tr-type G domain. Residues 19-26 (GHVDHGKT) are G1. Residue 19–26 (GHVDHGKT) participates in GTP binding. Thr26 contacts Mg(2+). The tract at residues 60–64 (GITIA) is G2. The segment at 81–84 (DCPG) is G3. GTP is bound by residues 81–85 (DCPGH) and 136–139 (NKAD). Residues 136-139 (NKAD) are G4. Residues 174–176 (SAL) are G5.

It belongs to the TRAFAC class translation factor GTPase superfamily. Classic translation factor GTPase family. EF-Tu/EF-1A subfamily. As to quaternary structure, monomer.

It is found in the cytoplasm. It catalyses the reaction GTP + H2O = GDP + phosphate + H(+). Functionally, GTP hydrolase that promotes the GTP-dependent binding of aminoacyl-tRNA to the A-site of ribosomes during protein biosynthesis. In Campylobacter lari (strain RM2100 / D67 / ATCC BAA-1060), this protein is Elongation factor Tu.